The following is a 227-amino-acid chain: Cytidylate kinase (227 aa).

Residue 12–20 coordinates ATP; the sequence is GPSGAGKGT.

The protein belongs to the cytidylate kinase family. Type 1 subfamily.

It localises to the cytoplasm. The enzyme catalyses CMP + ATP = CDP + ADP. It carries out the reaction dCMP + ATP = dCDP + ADP. The polypeptide is Cytidylate kinase (Enterobacter sp. (strain 638)).